The chain runs to 400 residues: Nicotinate phosphoribosyltransferase (400 aa).

His220 carries the phosphohistidine; by autocatalysis modification.

This sequence belongs to the NAPRTase family. Transiently phosphorylated on a His residue during the reaction cycle. Phosphorylation strongly increases the affinity for substrates and increases the rate of nicotinate D-ribonucleotide production. Dephosphorylation regenerates the low-affinity form of the enzyme, leading to product release.

It catalyses the reaction nicotinate + 5-phospho-alpha-D-ribose 1-diphosphate + ATP + H2O = nicotinate beta-D-ribonucleotide + ADP + phosphate + diphosphate. It functions in the pathway cofactor biosynthesis; NAD(+) biosynthesis; nicotinate D-ribonucleotide from nicotinate: step 1/1. Its function is as follows. Catalyzes the synthesis of beta-nicotinate D-ribonucleotide from nicotinate and 5-phospho-D-ribose 1-phosphate at the expense of ATP. In Shigella sonnei (strain Ss046), this protein is Nicotinate phosphoribosyltransferase.